Consider the following 198-residue polypeptide: 5'-deoxynucleotidase ETA_12010 (198 aa).

Residues 18–19 (RW) and His33 contribute to the substrate site. Positions 30 to 142 (VSEHSLQVAM…VKQADALCAY (113 aa)) constitute an HD domain. A divalent metal cation is bound by residues His33, His68, and Asp69. Residues Asp69, 77–80 (DLPT), and Asp137 contribute to the substrate site. Asp137 is an a divalent metal cation binding site.

Belongs to the 5DNU family. As to quaternary structure, homodimer. The cofactor is a divalent metal cation.

It is found in the cytoplasm. The catalysed reaction is a 2'-deoxyribonucleoside 5'-phosphate + H2O = a 2'-deoxyribonucleoside + phosphate. Its function is as follows. Catalyzes the strictly specific dephosphorylation of 2'-deoxyribonucleoside 5'-monophosphates. This Erwinia tasmaniensis (strain DSM 17950 / CFBP 7177 / CIP 109463 / NCPPB 4357 / Et1/99) protein is 5'-deoxynucleotidase ETA_12010.